The following is a 99-amino-acid chain: MPKFALKALWLENDLAIAVDQVVAKNRSPLTRYFFWPRDDAWEQLKAELESKTWISEEDRITLLNQATELINYWQNGGRERPISEAQAQFPDILIGGNA.

This sequence belongs to the chloroplast-specific ribosomal protein cS23 family. In terms of assembly, part of the 30S ribosomal subunit.

Its function is as follows. Probably a ribosomal protein or a ribosome-associated protein. This Synechococcus sp. (strain JA-3-3Ab) (Cyanobacteria bacterium Yellowstone A-Prime) protein is Probable small ribosomal subunit protein cS23.